We begin with the raw amino-acid sequence, 962 residues long: Leucine--tRNA ligase (962 aa).

Residues Pro-40–His-51 carry the 'HIGH' region motif. A 'KMSKS' region motif is present at residues Lys-737–Ser-741. Lys-740 lines the ATP pocket.

This sequence belongs to the class-I aminoacyl-tRNA synthetase family.

Its subcellular location is the cytoplasm. The enzyme catalyses tRNA(Leu) + L-leucine + ATP = L-leucyl-tRNA(Leu) + AMP + diphosphate. The protein is Leucine--tRNA ligase of Flavobacterium psychrophilum (strain ATCC 49511 / DSM 21280 / CIP 103535 / JIP02/86).